Reading from the N-terminus, the 479-residue chain is Citrate synthase, mitochondrial (479 aa).

The transit peptide at 1–37 (MSAILSTTSKSFLSRGSTRQCQNMQKALFALLNARHY) directs the protein to the mitochondrion. Residues His-312, His-358, and Asp-413 contribute to the active site. Position 462 is a phosphoserine (Ser-462).

It belongs to the citrate synthase family. As to quaternary structure, monomer and homodimer. Exists as an inactive monomer when phosphorylated. Homodimerization is dependent on dephosphorylation of Ser-462 by PTC7 and is required for activity. Phosphorylation at Ser-462. Dephosphorylated at Ser-462 by PTC7.

It is found in the mitochondrion matrix. The enzyme catalyses oxaloacetate + acetyl-CoA + H2O = citrate + CoA + H(+). It functions in the pathway carbohydrate metabolism; tricarboxylic acid cycle; isocitrate from oxaloacetate: step 1/2. Phosphorylation at Ser-462 inhibits catalytic activity. Dephosphorylation at Ser-462 by PTC7 enhances catalytic activity. In terms of biological role, specific citrate synthase with catalytic activity only with acetyl-CoA. This Saccharomyces cerevisiae (strain ATCC 204508 / S288c) (Baker's yeast) protein is Citrate synthase, mitochondrial.